We begin with the raw amino-acid sequence, 250 residues long: Hydroxyacylglutathione hydrolase (250 aa).

His-53, His-55, Asp-57, His-58, His-110, Asp-127, and His-165 together coordinate Zn(2+).

It belongs to the metallo-beta-lactamase superfamily. Glyoxalase II family. As to quaternary structure, monomer. Requires Zn(2+) as cofactor.

The catalysed reaction is an S-(2-hydroxyacyl)glutathione + H2O = a 2-hydroxy carboxylate + glutathione + H(+). It participates in secondary metabolite metabolism; methylglyoxal degradation; (R)-lactate from methylglyoxal: step 2/2. Functionally, thiolesterase that catalyzes the hydrolysis of S-D-lactoyl-glutathione to form glutathione and D-lactic acid. In Buchnera aphidicola subsp. Schizaphis graminum (strain Sg), this protein is Hydroxyacylglutathione hydrolase.